Here is a 489-residue protein sequence, read N- to C-terminus: Rhamnulokinase (489 aa).

13–17 (ASSGR) is a binding site for ATP. A disulfide bridge links C68 with C222. Substrate contacts are provided by residues G83 and 236 to 238 (HDT). Residue D237 is the Proton acceptor of the active site. T259 is a binding site for ATP. Residue N296 participates in substrate binding. Residue Q304 coordinates ATP. A disulfide bond links C353 and C370. G402 is an ATP binding site. Cysteines 413 and 417 form a disulfide.

It belongs to the rhamnulokinase family. Monomer. Requires Mg(2+) as cofactor.

The catalysed reaction is L-rhamnulose + ATP = L-rhamnulose 1-phosphate + ADP + H(+). The protein operates within carbohydrate degradation; L-rhamnose degradation; glycerone phosphate from L-rhamnose: step 2/3. Involved in the catabolism of L-rhamnose (6-deoxy-L-mannose). Catalyzes the transfer of the gamma-phosphate group from ATP to the 1-hydroxyl group of L-rhamnulose to yield L-rhamnulose 1-phosphate. This is Rhamnulokinase from Escherichia coli O17:K52:H18 (strain UMN026 / ExPEC).